The primary structure comprises 721 residues: MAEKFESLMNIHGFDLGSRYMDLKPLGCGGNGLVFSAVDNDCDKRVAVKKIVLTDPQSVKHALREIKIIRRLDHDNIVKVFEILGPSGSQLTDDVGSLTELNCVYIVQEYMETDLANLLEQGPLLEDHARLFMYQLLRGLKYIHSANVLHRDLKPANLFINTEDLVLKIGDFGLARIMDPHYSHKGHLSEGLVTKWYRSPRLLLSPNNYTKAIDMWAAGCIFAEMLTGKTLFAGAHELEQMQLILESIPVVHEEDRQELLNVIPVYIRNDMTEPHKPLTQLLPGISPEALDFLEQILTFSPMDRLTAEEALSHPYMSIYSFPTDEPISSHPFHIEDEVDDILLMDESHSHIYNWERYHESQFSDHDWPIHNNYEADEVQRDPRALSDVTDEEEVQVDPRKYLDGDREKYLEDPAFDTHFSTEPCWQYSDHHENKYCDLECSHTCNYKMRSSSYLDNLVWRDSEVNHYYEPKLIIDLSNWKEQSKEKSDKKGKSKCEKNGLVKAQIALEEASQQLVEKEREKNQGFDFDSFIAETIQLSLQHEPTDVDKLNDLNSSVSQMESKGLISKSVSREKQEKGMANLAQLGALYQTSWESQFVSNGEECFLIDQFCCEVRKDEQVEKENTYTSYLDKFFSKKEDAEMLEPEPVEEGKLGEKERGESFLSNSGELFFNKQLEAIGIPQFHSPVGSPLKSIQATLTPSAMKSSPQIPHKTYSSILKHLN.

The Protein kinase domain occupies 20–316; it reads YMDLKPLGCG…AEEALSHPYM (297 aa). ATP contacts are provided by residues 26 to 34 and K49; that span reads LGCGGNGLV. Residue D152 is the Proton acceptor of the active site. T626 carries the phosphothreonine modification. Positions 626–628 match the TXY motif; it reads TSY. Y628 is modified (phosphotyrosine).

This sequence belongs to the protein kinase superfamily. CMGC Ser/Thr protein kinase family. MAP kinase subfamily. Mg(2+) is required as a cofactor. In terms of processing, dually phosphorylated on Thr-626 and Tyr-628, which activates the enzyme.

It catalyses the reaction L-seryl-[protein] + ATP = O-phospho-L-seryl-[protein] + ADP + H(+). It carries out the reaction L-threonyl-[protein] + ATP = O-phospho-L-threonyl-[protein] + ADP + H(+). Its activity is regulated as follows. Activated by threonine and tyrosine phosphorylation. Functionally, phosphorylates microtubule-associated protein 2 (MAP2). May promote entry in the cell cycle. The polypeptide is Mitogen-activated protein kinase 6 (MAPK6) (Gallus gallus (Chicken)).